Reading from the N-terminus, the 292-residue chain is 31 kDa ribonucleoprotein, chloroplastic (292 aa).

Residues 88–166 (LKLFVGNLPF…RAIRVNAGPA (79 aa)) form the RRM 1 domain. The disordered stretch occupies residues 165–203 (PAPAKRENSSFGGGRGGNSSYGGGRDGNSSFGGARGGRS). Residues 167-207 (PAKRENSSFGGGRGGNSSYGGGRDGNSSFGGARGGRSVDSS) form a linker (Gly-rich) region. Over residues 175-190 (FGGGRGGNSSYGGGRD) the composition is skewed to gly residues. The region spanning 208-286 (NRVYVGNLSW…RSIRVSAAEE (79 aa)) is the RRM 2 domain.

Expressed at high levels in the leaves and seedlings, and lower levels are seen in the stems and roots.

The protein resides in the plastid. Its subcellular location is the chloroplast. This Nicotiana plumbaginifolia (Leadwort-leaved tobacco) protein is 31 kDa ribonucleoprotein, chloroplastic.